We begin with the raw amino-acid sequence, 286 residues long: Probable transport system permease protein NifC (286 aa).

The next 6 membrane-spanning stretches (helical) occupy residues 34-54 (LFLA…ISMI), 75-95 (IILS…IGTP), 114-134 (IFVE…LLLA), 152-172 (VIFT…ALYV), 216-236 (GLIL…MFAG), and 257-277 (IKMA…LLLL). The 204-residue stretch at 75-278 (IILSFVTSLI…IMTFVLLLLV (204 aa)) folds into the ABC transmembrane type-1 domain.

The protein belongs to the binding-protein-dependent transport system permease family. CysTW subfamily.

Its subcellular location is the cell membrane. Functionally, may be involved in molybdenum transport. This is Probable transport system permease protein NifC (nifC) from Clostridium pasteurianum.